A 411-amino-acid polypeptide reads, in one-letter code: Argininosuccinate lyase (411 aa).

It belongs to the lyase 1 family. Argininosuccinate lyase subfamily.

Its subcellular location is the cytoplasm. The catalysed reaction is 2-(N(omega)-L-arginino)succinate = fumarate + L-arginine. It functions in the pathway amino-acid biosynthesis; L-arginine biosynthesis; L-arginine from L-ornithine and carbamoyl phosphate: step 3/3. This is Argininosuccinate lyase from Legionella pneumophila subsp. pneumophila (strain Philadelphia 1 / ATCC 33152 / DSM 7513).